The following is a 448-amino-acid chain: Trigger factor (448 aa).

The region spanning G172 to P257 is the PPIase FKBP-type domain.

Belongs to the FKBP-type PPIase family. Tig subfamily.

It is found in the cytoplasm. The enzyme catalyses [protein]-peptidylproline (omega=180) = [protein]-peptidylproline (omega=0). In terms of biological role, involved in protein export. Acts as a chaperone by maintaining the newly synthesized protein in an open conformation. Functions as a peptidyl-prolyl cis-trans isomerase. This chain is Trigger factor, found in Burkholderia multivorans (strain ATCC 17616 / 249).